We begin with the raw amino-acid sequence, 310 residues long: 1-aminocyclopropane-1-carboxylate oxidase 1 (310 aa).

The stretch at 113–133 forms a coiled coil; the sequence is EELSKTMDEYVCQLHKFAERL. The Fe2OG dioxygenase domain occupies 158-259; sequence PAFGTKVAKY…RLSIATFYNP (102 aa). Fe cation-binding residues include H182, D184, and H240. 2-oxoglutarate is bound at residue R250.

The protein belongs to the iron/ascorbate-dependent oxidoreductase family. The cofactor is Fe(2+).

It carries out the reaction 1-aminocyclopropane-1-carboxylate + L-ascorbate + O2 = ethene + L-dehydroascorbate + hydrogen cyanide + CO2 + 2 H2O. It functions in the pathway alkene biosynthesis; ethylene biosynthesis via S-adenosyl-L-methionine; ethylene from S-adenosyl-L-methionine: step 2/2. Its function is as follows. Enzyme involved in the ethylene biosynthesis. May promote stem elongation by maximizing the extensibility cells, possibly by activating ethylene biosynthesis, in response to very-long-chain fatty acids (VLCFAs C20:0 to C30:0). This is 1-aminocyclopropane-1-carboxylate oxidase 1 (ACO1) from Arabidopsis thaliana (Mouse-ear cress).